The sequence spans 61 residues: Large ribosomal subunit protein uL30 (61 aa).

It belongs to the universal ribosomal protein uL30 family. As to quaternary structure, part of the 50S ribosomal subunit.

The sequence is that of Large ribosomal subunit protein uL30 from Lactobacillus delbrueckii subsp. bulgaricus (strain ATCC 11842 / DSM 20081 / BCRC 10696 / JCM 1002 / NBRC 13953 / NCIMB 11778 / NCTC 12712 / WDCM 00102 / Lb 14).